Consider the following 570-residue polypeptide: MPARISRATYAQMFGPTVGDKVRLADTDLIIEVERDLTTYGEEVKFGGGKVIRDGMGQSQLSRAEGAMDTVITNALILDHSGIYKADIGLLDGRIALIGKAGNPDTQPGISIIIGPGTEIIAGEGKIVTAGGIDTHVHFISPQQVDEALNAGITCMVGGGTGPAHGTLATTCTPGPWHIARLIQSFDGLPMNIGVFGKGNASLPGALEEMVRAGACGLKLHEDWGCTPAAIDNCLSVADHFDVQVAIHTDTLNEGGFVEDTLNAFKGRTIHSFHTEGAGGGHAPDIIRVCQYPNVLPASTNPTRPYTVNTIAEHLDMLMVCHHLSPAIPEDIAFAESRIRKETIAAEDILHDMGAFSIISSDSQAMGRVGEMIIRCWQTADKMKKQRGSLPDDRPGNDNYRARRYIAKYTINPAIAHGMAHEIGSVEVGKRADLVLWNPAFFGVKPDMVLLGGWIATAPMGDANGSIPTPQPMHTRPMFGSFGKARTNTSITFVSQAAMDEGLREKIGVDKQLVAVVNTRGGIGKHSMILNNAMPQMEVDPETYEVRADGELLTCEPVDVVPMAQRYFLF.

The Urease domain occupies 131–570 (GGIDTHVHFI…VPMAQRYFLF (440 aa)). Residues H136, H138, and K219 each coordinate Ni(2+). K219 is subject to N6-carboxylysine. Residue H221 coordinates substrate. 2 residues coordinate Ni(2+): H248 and H274. H322 serves as the catalytic Proton donor. D362 provides a ligand contact to Ni(2+).

The protein belongs to the metallo-dependent hydrolases superfamily. Urease alpha subunit family. As to quaternary structure, heterotrimer of UreA (gamma), UreB (beta) and UreC (alpha) subunits. Three heterotrimers associate to form the active enzyme. Requires Ni cation as cofactor. Carboxylation allows a single lysine to coordinate two nickel ions.

The protein resides in the cytoplasm. It carries out the reaction urea + 2 H2O + H(+) = hydrogencarbonate + 2 NH4(+). The protein operates within nitrogen metabolism; urea degradation; CO(2) and NH(3) from urea (urease route): step 1/1. Its function is as follows. Disrupting the ure1 operon causes loss of urease activity, decreased resistance to low pH killing in vitro and decreased pathogen survival when inoculated in BALB/c mice by gavage. This chain is Urease subunit alpha 1, found in Brucella suis biovar 1 (strain 1330).